The chain runs to 451 residues: Phosphoglucosamine mutase (451 aa).

Ser-102 acts as the Phosphoserine intermediate in catalysis. Positions 102, 242, 244, and 246 each coordinate Mg(2+). Position 102 is a phosphoserine (Ser-102).

This sequence belongs to the phosphohexose mutase family. The cofactor is Mg(2+). In terms of processing, activated by phosphorylation.

The catalysed reaction is alpha-D-glucosamine 1-phosphate = D-glucosamine 6-phosphate. Functionally, catalyzes the conversion of glucosamine-6-phosphate to glucosamine-1-phosphate. This chain is Phosphoglucosamine mutase, found in Staphylococcus aureus (strain bovine RF122 / ET3-1).